The following is a 287-amino-acid chain: ATP synthase gamma chain (287 aa).

Belongs to the ATPase gamma chain family. In terms of assembly, F-type ATPases have 2 components, CF(1) - the catalytic core - and CF(0) - the membrane proton channel. CF(1) has five subunits: alpha(3), beta(3), gamma(1), delta(1), epsilon(1). CF(0) has three main subunits: a, b and c.

The protein localises to the cell inner membrane. Its function is as follows. Produces ATP from ADP in the presence of a proton gradient across the membrane. The gamma chain is believed to be important in regulating ATPase activity and the flow of protons through the CF(0) complex. The polypeptide is ATP synthase gamma chain (Xylella fastidiosa (strain M23)).